The sequence spans 751 residues: Transposable element P transposase (751 aa).

Residues M1–V77 form a THAP-type zinc finger.

Functionally, P-element transposase that specifically mediates transposition of P-elements. Mediates both; precise and imprecise excision. The chain is Transposable element P transposase from Drosophila melanogaster (Fruit fly).